The sequence spans 532 residues: 2,3-bisphosphoglycerate-independent phosphoglycerate mutase (532 aa).

Mn(2+) contacts are provided by aspartate 13 and serine 63. The active-site Phosphoserine intermediate is serine 63. Substrate is bound by residues histidine 124, 154 to 155, arginine 187, arginine 193, 262 to 265, and lysine 343; these read RD and RPDR. Mn(2+) contacts are provided by aspartate 421, histidine 425, aspartate 463, histidine 464, and histidine 481.

The protein belongs to the BPG-independent phosphoglycerate mutase family. Monomer. Mn(2+) serves as cofactor.

It catalyses the reaction (2R)-2-phosphoglycerate = (2R)-3-phosphoglycerate. It participates in carbohydrate degradation; glycolysis; pyruvate from D-glyceraldehyde 3-phosphate: step 3/5. Its function is as follows. Catalyzes the interconversion of 2-phosphoglycerate and 3-phosphoglycerate. This Mesoplasma florum (strain ATCC 33453 / NBRC 100688 / NCTC 11704 / L1) (Acholeplasma florum) protein is 2,3-bisphosphoglycerate-independent phosphoglycerate mutase.